The sequence spans 502 residues: Actin-binding protein WASF3 (502 aa).

Positions N57–Q93 form a coiled coil. Residue Y151 is modified to Phosphotyrosine; by ABL1. A coiled-coil region spans residues K162–N206. Disordered stretches follow at residues T169–Y210 and S223–D443. Positions Q182–V192 are enriched in basic and acidic residues. Over residues S223–D237 the composition is skewed to polar residues. At Y248 the chain carries Phosphotyrosine; by ABL1. Over residues Q302–A312 the composition is skewed to pro residues. Phosphotyrosine; by ABL1 is present on Y337. Pro residues-rich tracts occupy residues S341 to I352 and A394 to P410. Positions G411 to P423 are enriched in low complexity. Residues A440 to V457 form the WH2 domain. Y486 is subject to Phosphotyrosine; by ABL1.

Belongs to the SCAR/WAVE family. Binds actin and the Arp2/3 complex. Post-translationally, phosphorylation by ABL1 promotes lamellipodia formation and cell migration. As to expression, expressed in ovary and brain.

It localises to the cytoplasm. The protein resides in the cytoskeleton. Its function is as follows. Downstream effector molecules involved in the transmission of signals from tyrosine kinase receptors and small GTPases to the actin cytoskeleton. Plays a role in the regulation of cell morphology and cytoskeletal organization. Required in the control of cell shape. The sequence is that of Actin-binding protein WASF3 (WASF3) from Homo sapiens (Human).